The following is a 104-amino-acid chain: Flagellar hook-basal body complex protein FliE (104 aa).

This sequence belongs to the FliE family.

It is found in the bacterial flagellum basal body. This chain is Flagellar hook-basal body complex protein FliE, found in Escherichia coli O6:K15:H31 (strain 536 / UPEC).